A 359-amino-acid chain; its full sequence is 3-dehydroquinate synthase (359 aa).

Residues 69 to 74 (DGEQHK), 103 to 107 (GVIGD), 127 to 128 (TT), lysine 140, lysine 149, and 167 to 170 (TLDT) each bind NAD(+). Residues glutamate 182, histidine 245, and histidine 262 each coordinate Zn(2+).

The protein belongs to the sugar phosphate cyclases superfamily. Dehydroquinate synthase family. Requires Co(2+) as cofactor. Zn(2+) serves as cofactor. It depends on NAD(+) as a cofactor.

It is found in the cytoplasm. It carries out the reaction 7-phospho-2-dehydro-3-deoxy-D-arabino-heptonate = 3-dehydroquinate + phosphate. It functions in the pathway metabolic intermediate biosynthesis; chorismate biosynthesis; chorismate from D-erythrose 4-phosphate and phosphoenolpyruvate: step 2/7. In terms of biological role, catalyzes the conversion of 3-deoxy-D-arabino-heptulosonate 7-phosphate (DAHP) to dehydroquinate (DHQ). This is 3-dehydroquinate synthase from Nitrosococcus oceani (strain ATCC 19707 / BCRC 17464 / JCM 30415 / NCIMB 11848 / C-107).